The sequence spans 68 residues: Protein SlyX homolog (68 aa).

This sequence belongs to the SlyX family.

This Pseudomonas fluorescens (strain Pf0-1) protein is Protein SlyX homolog.